Reading from the N-terminus, the 184-residue chain is MVQRLKTLYLESAVLKLQETFGYKNPHQIPRIKKIVINCGLSEASQNSKSLESAMKELSIIAGQKGVITRAKKAIAGFKIREGLPIGICITLRGDSMYAFLDRLINLALPRIRDFQGVSSKSFDGHGNYNLGLKEQLMFPEIDYDQIDKIRGMDICIVTNAKTDSEGFYLLEVLGMPFKEKFAN.

The protein belongs to the universal ribosomal protein uL5 family. As to quaternary structure, part of the 50S ribosomal subunit; contacts the 5S rRNA.

The protein localises to the plastid. It localises to the chloroplast. Binds 5S rRNA, forms part of the central protuberance of the 50S subunit. This Mesostigma viride (Green alga) protein is Large ribosomal subunit protein uL5c (rpl5).